Here is a 342-residue protein sequence, read N- to C-terminus: Serpentine receptor class r-10 (342 aa).

Residues 1 to 11 lie on the Extracellular side of the membrane; sequence MTGELWLTLVD. A helical membrane pass occupies residues 12–32; the sequence is TADIVGFSMTFCVNIVLLFLL. The Cytoplasmic segment spans residues 33–38; sequence KNRGKN. A helical membrane pass occupies residues 39–59; sequence LGTYKHLMAFFSVFSIFYAII. At 60–92 the chain is on the extracellular side; that stretch reads ESILRPIMHIENATFFLISRKRFNYSTRLGKIN. N-linked (GlcNAc...) asparagine glycosylation is found at N71 and N83. Residues 93–113 traverse the membrane as a helical segment; that stretch reads SAFYCACFATSFVVSGVHFVY. At 114 to 131 the chain is on the cytoplasmic side; the sequence is RFFASCKPHLLRSFNMPY. Residues 132-152 traverse the membrane as a helical segment; it reads LLLWPLGCSIPVMMWASVSYF. The Extracellular portion of the chain corresponds to 153–202; sequence LYPDTAFTEAAVTNVLNTHYHSIKKDNVSYIAYVYYQYDENGVRYVYLKN. An N-linked (GlcNAc...) asparagine glycan is attached at N179. The helical transmembrane segment at 203-223 threads the bilayer; the sequence is LLGCFVHYFVMSATFVVMFIC. The Cytoplasmic segment spans residues 224 to 257; sequence GYLTWKTMRKHKTASDRTRQLQKQLFKALVLQTL. A helical membrane pass occupies residues 258-278; it reads IPTIFMYAPTGVMFIAPFFSI. At 279–285 the chain is on the extracellular side; that stretch reads NLNANAN. A helical transmembrane segment spans residues 286–306; that stretch reads FIVFCSFLYPGLDPLILILII. Residues 307–342 lie on the Cytoplasmic side of the membrane; that stretch reads RDFRQTVFKFFCLRKKNSVDESRSTTRANMSQVATH.

The protein belongs to the nematode receptor-like protein str family. As to quaternary structure, interacts with odr-4.

It localises to the cell projection. It is found in the cilium membrane. Its function is as follows. An odorant receptor which affects chemotaxis to the volatile odorant diacetyl. Specifies AWA neuronal cell fate via the odr-7 pathway. This is Serpentine receptor class r-10 from Caenorhabditis briggsae.